The primary structure comprises 352 residues: Protein NDRG4 (352 aa).

A phosphoserine mark is found at S298, S317, and S323. The segment at 301–352 (AVPSASMTRLARSRTASLTSASSVDGSRPQPCTHSDSSEGMGQVNHTMEVSC) is disordered. The span at 308–323 (TRLARSRTASLTSASS) shows a compositional bias: low complexity. The span at 330-352 (QPCTHSDSSEGMGQVNHTMEVSC) shows a compositional bias: polar residues.

This sequence belongs to the NDRG family. As to expression, expressed in the brain and heart, weakly in the kidney; most prominently in postnatal brain where it is expressed widely in the olfactory bulb, cerebral cortex, hippocampus, cerebellum, thalamus, and medulla oblongata.

It localises to the cytoplasm. Its subcellular location is the cytosol. Functionally, contributes to the maintenance of intracerebral BDNF levels within the normal range, which is necessary for the preservation of spatial learning and the resistance to neuronal cell death caused by ischemic stress. May enhance growth factor-induced ERK1 and ERK2 phosphorylation, including that induced by NGF. May attenuate NGF-promoted ELK1 phosphorylation in a microtubule-dependent manner. This chain is Protein NDRG4 (Ndrg4), found in Rattus norvegicus (Rat).